The following is a 459-amino-acid chain: Mitochondrial distribution and morphology protein 34 (459 aa).

An SMP-LTD domain is found at 1–190; sequence MSFRFNEAVF…LPSLIFNTSQ (190 aa). Positions 338–347 are enriched in basic and acidic residues; it reads RSNSNDDNAK. The segment at 338 to 375 is disordered; the sequence is RSNSNDDNAKPRRRKIKCKKTRTPSNLQSQGEQAVDDS. Residues 348 to 359 are compositionally biased toward basic residues; it reads PRRRKIKCKKTR.

It belongs to the MDM34 family. As to quaternary structure, component of the ER-mitochondria encounter structure (ERMES) or MDM complex, composed of MMM1, MDM10, MDM12 and MDM34. In terms of processing, ubiquitinated by a SCF (SKP1-CUL1-F-box protein) E3 ubiquitin-protein ligase complex containing the F-box protein MDM30. Ubiquitination is important for mitochondrial integrity.

Its subcellular location is the mitochondrion outer membrane. Component of the ERMES/MDM complex, which serves as a molecular tether to connect the endoplasmic reticulum (ER) and mitochondria. Components of this complex are involved in the control of mitochondrial shape and protein biogenesis, and function in nonvesicular lipid trafficking between the ER and mitochondria. MDM34 is required for the interaction of the ER-resident membrane protein MMM1 and the outer mitochondrial membrane-resident beta-barrel protein MDM10. In Saccharomyces cerevisiae (strain RM11-1a) (Baker's yeast), this protein is Mitochondrial distribution and morphology protein 34.